We begin with the raw amino-acid sequence, 169 residues long: Required for excision 1-B domain-containing protein (169 aa).

This Mus musculus (Mouse) protein is Required for excision 1-B domain-containing protein.